The chain runs to 371 residues: Queuine tRNA-ribosyltransferase (371 aa).

Asp-89 (proton acceptor) is an active-site residue. Substrate contacts are provided by residues 89 to 93 (DSGGF), Asp-143, Gln-185, and Gly-212. Positions 243 to 249 (GVGKPED) are RNA binding. Residue Asp-262 is the Nucleophile of the active site. The RNA binding; important for wobble base 34 recognition stretch occupies residues 267-271 (TRNAR). Zn(2+) contacts are provided by Cys-300, Cys-302, Cys-305, and His-331.

This sequence belongs to the queuine tRNA-ribosyltransferase family. As to quaternary structure, homodimer. Within each dimer, one monomer is responsible for RNA recognition and catalysis, while the other monomer binds to the replacement base PreQ1. Zn(2+) is required as a cofactor.

It catalyses the reaction 7-aminomethyl-7-carbaguanine + guanosine(34) in tRNA = 7-aminomethyl-7-carbaguanosine(34) in tRNA + guanine. It participates in tRNA modification; tRNA-queuosine biosynthesis. In terms of biological role, catalyzes the base-exchange of a guanine (G) residue with the queuine precursor 7-aminomethyl-7-deazaguanine (PreQ1) at position 34 (anticodon wobble position) in tRNAs with GU(N) anticodons (tRNA-Asp, -Asn, -His and -Tyr). Catalysis occurs through a double-displacement mechanism. The nucleophile active site attacks the C1' of nucleotide 34 to detach the guanine base from the RNA, forming a covalent enzyme-RNA intermediate. The proton acceptor active site deprotonates the incoming PreQ1, allowing a nucleophilic attack on the C1' of the ribose to form the product. After dissociation, two additional enzymatic reactions on the tRNA convert PreQ1 to queuine (Q), resulting in the hypermodified nucleoside queuosine (7-(((4,5-cis-dihydroxy-2-cyclopenten-1-yl)amino)methyl)-7-deazaguanosine). This is Queuine tRNA-ribosyltransferase from Pseudomonas syringae pv. tomato (strain ATCC BAA-871 / DC3000).